Consider the following 491-residue polypeptide: UDP-N-acetylmuramoyl-L-alanyl-D-glutamate--2,6-diaminopimelate ligase (491 aa).

A UDP-N-acetyl-alpha-D-muramoyl-L-alanyl-D-glutamate-binding site is contributed by serine 30. 108 to 114 (GTNGKTT) lines the ATP pocket. Residues asparagine 149, 150 to 151 (TT), serine 177, glutamine 183, and arginine 185 each bind UDP-N-acetyl-alpha-D-muramoyl-L-alanyl-D-glutamate. Lysine 217 carries the N6-carboxylysine modification. Residues arginine 383, 407–410 (DNPR), glycine 458, and glutamate 462 each bind meso-2,6-diaminopimelate. The Meso-diaminopimelate recognition motif signature appears at 407-410 (DNPR).

The protein belongs to the MurCDEF family. MurE subfamily. Mg(2+) is required as a cofactor. In terms of processing, carboxylation is probably crucial for Mg(2+) binding and, consequently, for the gamma-phosphate positioning of ATP.

It localises to the cytoplasm. The catalysed reaction is UDP-N-acetyl-alpha-D-muramoyl-L-alanyl-D-glutamate + meso-2,6-diaminopimelate + ATP = UDP-N-acetyl-alpha-D-muramoyl-L-alanyl-gamma-D-glutamyl-meso-2,6-diaminopimelate + ADP + phosphate + H(+). The protein operates within cell wall biogenesis; peptidoglycan biosynthesis. In terms of biological role, catalyzes the addition of meso-diaminopimelic acid to the nucleotide precursor UDP-N-acetylmuramoyl-L-alanyl-D-glutamate (UMAG) in the biosynthesis of bacterial cell-wall peptidoglycan. This is UDP-N-acetylmuramoyl-L-alanyl-D-glutamate--2,6-diaminopimelate ligase from Listeria monocytogenes serotype 4b (strain F2365).